The primary structure comprises 404 residues: High affinity immunoglobulin gamma Fc receptor I (404 aa).

Residues methionine 1–glycine 24 form the signal peptide. Residues glutamate 25–proline 297 are Extracellular-facing. N-linked (GlcNAc...) asparagine glycans are attached at residues asparagine 28, asparagine 48, asparagine 69, asparagine 168, and asparagine 249. Ig-like C2-type domains lie at alanine 32–histidine 111, leucine 117–valine 194, and proline 201–glutamate 286. Disulfide bonds link cysteine 53–cysteine 95, cysteine 134–cysteine 177, and cysteine 221–cysteine 269. Residues valine 298–valine 320 form a helical membrane-spanning segment. Residues lysine 321 to glycine 342 are interaction with EPB41L2. Topologically, residues lysine 321 to serine 404 are cytoplasmic. Residues asparagine 346–serine 404 are disordered. Residue serine 347 is modified to Phosphoserine. Phosphothreonine is present on threonine 368. A compositionally biased stretch (polar residues) spans serine 394–serine 404.

Belongs to the immunoglobulin superfamily. FCGR1 family. In terms of assembly, interacts with FCERG1; forms a functional signaling complex. Interacts with FLNA; prevents FCGR1A degradation. Interacts with EPB41L2, LAT and PPL. Interacts with HCK and LYN. Post-translationally, N-glycosylated. Phosphorylated on serine residues. Macrophage-specific.

Its subcellular location is the cell membrane. Functionally, high affinity receptor for the Fc region of immunoglobulins gamma. Functions in both innate and adaptive immune responses. This is High affinity immunoglobulin gamma Fc receptor I (Fcgr1) from Mus musculus (Mouse).